The sequence spans 116 residues: MGEAPAQIPTSFGHELRACLRCRLVKTYDQFRDSGCENCPFFKIEDDHERIVDVTTPNFNGIISMMDPRRSWAARWLRIGKFAPGCYTLAVSEALPEEMQFICQQARVQYVPPKRI.

Residues 19-39 (CLRCRLVKTYDQFRDSGCENC) form a C4-type zinc finger.

It belongs to the SPT4 family.

It localises to the nucleus. In terms of biological role, may regulate transcription elongation by RNA polymerase II. May enhance transcriptional pausing at sites proximal to the promoter, which may in turn facilitate the assembly of an elongation competent RNA polymerase II complex. This chain is Transcription elongation factor SPT4 homolog 1, found in Arabidopsis thaliana (Mouse-ear cress).